A 268-amino-acid polypeptide reads, in one-letter code: 4-hydroxy-tetrahydrodipicolinate reductase (268 aa).

Residues 7 to 12 (GAGGRM) and Glu33 contribute to the NAD(+) site. Position 34 (Arg34) interacts with NADP(+). Residues 97 to 99 (GTT) and 121 to 124 (SGNM) each bind NAD(+). The active-site Proton donor/acceptor is the His155. His156 lines the (S)-2,3,4,5-tetrahydrodipicolinate pocket. The Proton donor role is filled by Lys159. 165-166 (GT) contacts (S)-2,3,4,5-tetrahydrodipicolinate.

It belongs to the DapB family.

It is found in the cytoplasm. It catalyses the reaction (S)-2,3,4,5-tetrahydrodipicolinate + NAD(+) + H2O = (2S,4S)-4-hydroxy-2,3,4,5-tetrahydrodipicolinate + NADH + H(+). The catalysed reaction is (S)-2,3,4,5-tetrahydrodipicolinate + NADP(+) + H2O = (2S,4S)-4-hydroxy-2,3,4,5-tetrahydrodipicolinate + NADPH + H(+). Its pathway is amino-acid biosynthesis; L-lysine biosynthesis via DAP pathway; (S)-tetrahydrodipicolinate from L-aspartate: step 4/4. In terms of biological role, catalyzes the conversion of 4-hydroxy-tetrahydrodipicolinate (HTPA) to tetrahydrodipicolinate. The sequence is that of 4-hydroxy-tetrahydrodipicolinate reductase from Brucella melitensis biotype 1 (strain ATCC 23456 / CCUG 17765 / NCTC 10094 / 16M).